Consider the following 296-residue polypeptide: Glucokinase (296 aa).

The protein belongs to the ROK (NagC/XylR) family. As to quaternary structure, homodimer. Requires a divalent metal cation as cofactor.

It carries out the reaction D-glucose + ATP = D-glucose 6-phosphate + ADP + H(+). Catalyzes the phosphorylation of D-glucose to D-glucose 6-phosphate using ATP as the phosphate donor. Has a broad hexose specificity, and in addition to glucose, which shows the highest catalytic efficiency, it can also phosphorylate fructose, mannose, galactose and sorbitol. Can also use CTP, GTP or UTP as phosphoryl donor. This Pyrobaculum calidifontis (strain DSM 21063 / JCM 11548 / VA1) protein is Glucokinase.